We begin with the raw amino-acid sequence, 43 residues long: MFTNSIKNLIIYLMPLMVTLMLLSVSFVDAGKKPSGPNPGGNN.

The N-terminal stretch at 1–30 (MFTNSIKNLIIYLMPLMVTLMLLSVSFVDA) is a signal peptide. The CLE signature appears at 31–43 (GKKPSGPNPGGNN).

Belongs to the CLV3/ESR signal peptide family. In terms of tissue distribution, highly expressed exclusively within the subventral esophageal gland cell during syncytium formation in host plants.

The protein resides in the secreted. It localises to the host cytoplasm. The protein localises to the host extracellular space. Functionally, plays a role in the differentiation or division of feeding cells (syncytia) induced in plant roots during infection. Promotes host root growth. The protein is CLAVATA3/ESR (CLE)-related protein 16D10 (16D10) of Meloidogyne arenaria (Peanut root-knot nematode).